We begin with the raw amino-acid sequence, 457 residues long: Multidrug resistance protein MdtK (457 aa).

The next 12 membrane-spanning stretches (helical) occupy residues 11–31 (LLALAIPVILAQIAQTAMGFV), 53–73 (IWLPAILFGHGLLLALTPVIA), 93–113 (WLAGCVSVLIMFVLWNAGYII), 127–147 (AVGYLRALLWGAPGYLFFQVA), 160–180 (GMVIGFLGLLVNIPVNYIFIY), 188–208 (LGGVGCGVATAAVYWVMFIAM), 243–263 (LPIALALFFEVTLFAVVALLV), 276–296 (IALNFSSLMFVLPMSLAAAVT), 314–334 (AARTGLGVGVCMAVITAIFTV), 357–377 (LMLLAAVYQISDSIQVIGSGI), 387–407 (IFFITFTAYWVLGLPSGYILA), and 418–438 (PAGFWMGFIIGLTSAAIMMML).

It belongs to the multi antimicrobial extrusion (MATE) (TC 2.A.66.1) family. MdtK subfamily.

It localises to the cell inner membrane. Multidrug efflux pump that functions probably as a Na(+)/drug antiporter. The chain is Multidrug resistance protein MdtK from Citrobacter koseri (strain ATCC BAA-895 / CDC 4225-83 / SGSC4696).